Consider the following 273-residue polypeptide: NADPH-dependent 7-cyano-7-deazaguanine reductase (273 aa).

80-82 (VES) lines the substrate pocket. An NADPH-binding site is contributed by 82–83 (SK). Cys-180 acts as the Thioimide intermediate in catalysis. Residue Asp-187 is the Proton donor of the active site. A substrate-binding site is contributed by 219-220 (HE). Residue 248–249 (RG) coordinates NADPH.

The protein belongs to the GTP cyclohydrolase I family. QueF type 2 subfamily. As to quaternary structure, homodimer.

It is found in the cytoplasm. It catalyses the reaction 7-aminomethyl-7-carbaguanine + 2 NADP(+) = 7-cyano-7-deazaguanine + 2 NADPH + 3 H(+). It participates in tRNA modification; tRNA-queuosine biosynthesis. Functionally, catalyzes the NADPH-dependent reduction of 7-cyano-7-deazaguanine (preQ0) to 7-aminomethyl-7-deazaguanine (preQ1). The chain is NADPH-dependent 7-cyano-7-deazaguanine reductase from Bordetella bronchiseptica (strain ATCC BAA-588 / NCTC 13252 / RB50) (Alcaligenes bronchisepticus).